A 272-amino-acid polypeptide reads, in one-letter code: Testis-specific gene 13 protein (272 aa).

The polypeptide is Testis-specific gene 13 protein (TSGA13) (Bos taurus (Bovine)).